The sequence spans 211 residues: Endonuclease Htp3 (211 aa).

The signal sequence occupies residues 1-20 (MLEVPVWIPILAFAVGLGLG). Positions 48 to 51 (RTLR) match the RxLR motif. In terms of domain architecture, TNase-like spans 48–198 (RTLRGKVVSV…REKRVNIWSL (151 aa)). Asp-77 serves as a coordination point for Ca(2+). The active site involves Arg-90. Ca(2+) is bound at residue Asp-95. Residues Glu-98 and Arg-138 contribute to the active site. An N-linked (GlcNAc...) asparagine glycan is attached at Asn-153. The interval 200-211 (KRETPAQYKARK) is binding to the host cell surface.

In the N-terminal section; belongs to the RxLR effector family. The protein in the C-terminal section; belongs to the LCL3 family. Interacts with the host cell surface endoplasmin gp96, in order to get translocated into to host cell. Interacts with the effector Htp1, in order to get released from vesicles into the host cytosol.

Its subcellular location is the secreted. It is found in the host cytoplasm. It localises to the host cytosol. With respect to regulation, the nuclease activity shows a general salt dependency with a clear reduction by magnesium and sulfate ions. Effector involved in the disease saprolegniosis in salmonids and other freshwater fish, resulting in considerable economic losses in aquaculture. Within the host fish cells, Htp3 is released from vesicles into host cytosol where it degrades nucleic acids. The chain is Endonuclease Htp3 (HTP3) from Saprolegnia parasitica (strain CBS 223.65).